A 774-amino-acid polypeptide reads, in one-letter code: Penicillin acylase 2 proenzyme (774 aa).

Catalysis depends on Ser240, which acts as the Nucleophile.

The protein belongs to the peptidase S45 family. As to quaternary structure, heterodimer of a small subunit and a large subunit processed from the same precursor.

It catalyses the reaction a penicillin + H2O = 6-aminopenicillanate + a carboxylate. In Pseudomonas sp. (strain SE83), this protein is Penicillin acylase 2 proenzyme (acyII).